Consider the following 860-residue polypeptide: DNA mismatch repair protein MutS (860 aa).

607–614 (GPNMSGKS) contacts ATP.

This sequence belongs to the DNA mismatch repair MutS family.

This protein is involved in the repair of mismatches in DNA. It is possible that it carries out the mismatch recognition step. This protein has a weak ATPase activity. This is DNA mismatch repair protein MutS from Listeria monocytogenes serovar 1/2a (strain ATCC BAA-679 / EGD-e).